A 78-amino-acid chain; its full sequence is MFIYCIPLISQSMIPMALDKTINVMKVTGMFAATYFTGDNRTPFFAFIICLKSFKLENMDQPPKNKSNIFPAVEDSLL.

This is an uncharacterized protein from Bacillus subtilis (strain 168).